The chain runs to 302 residues: Glycine--tRNA ligase alpha subunit (302 aa).

It belongs to the class-II aminoacyl-tRNA synthetase family. In terms of assembly, tetramer of two alpha and two beta subunits.

The protein localises to the cytoplasm. The enzyme catalyses tRNA(Gly) + glycine + ATP = glycyl-tRNA(Gly) + AMP + diphosphate. The sequence is that of Glycine--tRNA ligase alpha subunit from Psychromonas ingrahamii (strain DSM 17664 / CCUG 51855 / 37).